The primary structure comprises 159 residues: Endoribonuclease YbeY (159 aa).

Residues His125, His129, and His135 each contribute to the Zn(2+) site.

This sequence belongs to the endoribonuclease YbeY family. It depends on Zn(2+) as a cofactor.

The protein localises to the cytoplasm. Single strand-specific metallo-endoribonuclease involved in late-stage 70S ribosome quality control and in maturation of the 3' terminus of the 16S rRNA. This chain is Endoribonuclease YbeY, found in Brevibacillus brevis (strain 47 / JCM 6285 / NBRC 100599).